The sequence spans 29 residues: Lambda-theraphotoxin-Ec2c (29 aa).

Disulfide bonds link Cys2/Cys16, Cys9/Cys21, and Cys15/Cys25.

The protein belongs to the neurotoxin 30 (phrixotoxin) family. In terms of tissue distribution, expressed by the venom gland.

The protein localises to the secreted. Both insecticidal and vertebrate neurotoxin that potently blocks insect calcium-activated potassium (BKCa) channels (Slo-type) in cockroach dorsal unpaired median (DUM) neurons (IC(50)=24.6 nM). This occurs in the absence of any shifts in the voltage dependence of activation. May interact with the turret and/or loop region of the external entrance to the channel and does not project deeply into the pore of the channel. Also shows toxicity to mice by introcerebroventicular injection. This Eucratoscelus constrictus (African red-rump baboon spider) protein is Lambda-theraphotoxin-Ec2c.